A 121-amino-acid polypeptide reads, in one-letter code: Fluoride-specific ion channel FluC 2 (121 aa).

Transmembrane regions (helical) follow at residues Y3–I23, I31–A51, G64–V84, and F92–L112. Na(+) is bound by residues G71 and T74.

The protein belongs to the fluoride channel Fluc/FEX (TC 1.A.43) family.

The protein localises to the cell membrane. The catalysed reaction is fluoride(in) = fluoride(out). With respect to regulation, na(+) is not transported, but it plays an essential structural role and its presence is essential for fluoride channel function. Functionally, fluoride-specific ion channel. Important for reducing fluoride concentration in the cell, thus reducing its toxicity. The chain is Fluoride-specific ion channel FluC 2 from Staphylococcus saprophyticus subsp. saprophyticus (strain ATCC 15305 / DSM 20229 / NCIMB 8711 / NCTC 7292 / S-41).